Consider the following 314-residue polypeptide: Olfactory receptor 14K1 (314 aa).

Topologically, residues 1–23 (MTNQTQMMEFLLVRFTENWVLLR) are extracellular. N3 carries an N-linked (GlcNAc...) asparagine glycan. Residues 24 to 44 (LHALLFSLIYLTAVLMNLVII) form a helical membrane-spanning segment. Over 45 to 52 (LLMILDHR) the chain is Cytoplasmic. Residues 53–73 (LHMAMYFFLRHLSFLDLCLIS) form a helical membrane-spanning segment. The Extracellular portion of the chain corresponds to 74–97 (ATVPKSILNSVASTDSISFLGCVL). C95 and C187 are disulfide-bonded. Residues 98 to 118 (QLFLVVLLAGSEIGILTAMSY) form a helical membrane-spanning segment. Residues 119–131 (DRYAAICCPLHCE) are Cytoplasmic-facing. Residues 132-152 (AVMSRGLCVQLMALSWLNRGA) traverse the membrane as a helical segment. Topologically, residues 153–194 (LGLLYTAGTFSLNFYGSDELHQFFCDVPALLKLTCSKEHAII) are extracellular. A helical transmembrane segment spans residues 195-215 (SVSVAIGVCYAFSCLVCIVVS). The Cytoplasmic portion of the chain corresponds to 216–235 (YVYIFSAVLRISQRQRQSKA). A helical transmembrane segment spans residues 236–256 (FSNCVPHLIVVTVFLVTGAVA). At 257–269 (YLKPGSDAPSILD) the chain is on the extracellular side. The helical transmembrane segment at 270–290 (LLVSVFYSVAPPTLNPVIYCL) threads the bilayer. The Cytoplasmic segment spans residues 291–314 (KNKDIKSALSKVLWNVRSSGVMKR).

The protein belongs to the G-protein coupled receptor 1 family.

It is found in the cell membrane. Odorant receptor. The sequence is that of Olfactory receptor 14K1 (OR14K1) from Homo sapiens (Human).